We begin with the raw amino-acid sequence, 473 residues long: 3-isopropylmalate dehydratase large subunit (473 aa).

[4Fe-4S] cluster-binding residues include C354, C414, and C417.

Belongs to the aconitase/IPM isomerase family. LeuC type 1 subfamily. In terms of assembly, heterodimer of LeuC and LeuD. Requires [4Fe-4S] cluster as cofactor.

It carries out the reaction (2R,3S)-3-isopropylmalate = (2S)-2-isopropylmalate. It participates in amino-acid biosynthesis; L-leucine biosynthesis; L-leucine from 3-methyl-2-oxobutanoate: step 2/4. Its function is as follows. Catalyzes the isomerization between 2-isopropylmalate and 3-isopropylmalate, via the formation of 2-isopropylmaleate. The polypeptide is 3-isopropylmalate dehydratase large subunit (Rhodopseudomonas palustris (strain BisB18)).